The sequence spans 101 residues: MAKISAVERNKKRERLTKRDAGKRAELKALIKDRALEPEDRFQAVLKLAQLPRNGSKTRVHNRCELTGRPHSVYRKFKLGRIMLRDLASQGQIPGMVKSSW.

Residues 1-20 (MAKISAVERNKKRERLTKRD) form a disordered region.

It belongs to the universal ribosomal protein uS14 family. Part of the 30S ribosomal subunit. Contacts proteins S3 and S10.

In terms of biological role, binds 16S rRNA, required for the assembly of 30S particles and may also be responsible for determining the conformation of the 16S rRNA at the A site. In Rhodospirillum rubrum (strain ATCC 11170 / ATH 1.1.1 / DSM 467 / LMG 4362 / NCIMB 8255 / S1), this protein is Small ribosomal subunit protein uS14.